Reading from the N-terminus, the 89-residue chain is Small ribosomal subunit protein uS15 (89 aa).

This sequence belongs to the universal ribosomal protein uS15 family. Part of the 30S ribosomal subunit. Forms a bridge to the 50S subunit in the 70S ribosome, contacting the 23S rRNA.

Its function is as follows. One of the primary rRNA binding proteins, it binds directly to 16S rRNA where it helps nucleate assembly of the platform of the 30S subunit by binding and bridging several RNA helices of the 16S rRNA. Forms an intersubunit bridge (bridge B4) with the 23S rRNA of the 50S subunit in the ribosome. This is Small ribosomal subunit protein uS15 from Pseudomonas fluorescens (strain Pf0-1).